Here is a 408-residue protein sequence, read N- to C-terminus: Multidrug resistance protein MdtG (408 aa).

10 helical membrane-spanning segments follow: residues 16-36 (LIVAWLGCFLTGAAFSLVMPF), 58-78 (IVFSITFLFSAIASPFWGGLA), 92-112 (LGMGIVMVLMGLAQNIWQFLI), 115-135 (ALLGLLGGFVPNANALIATQV), 146-166 (TLSTGGVSGALLGPMAGGLLA), 173-193 (PVFFITASVLILCFFVTLFCI), 224-244 (LFVTTLIIQVATGSIAPILTL), 256-276 (VAFISGMIASVPGVAALLSAP), 290-310 (ILITALIFSVLLLIPMSYVQT), and 378-398 (AVFLVTAGVVLFNAVYSWNSL).

The protein belongs to the major facilitator superfamily. DHA1 family. MdtG (TC 2.A.1.2.20) subfamily.

It is found in the cell inner membrane. In terms of biological role, confers resistance to fosfomycin and deoxycholate. This Escherichia coli O17:K52:H18 (strain UMN026 / ExPEC) protein is Multidrug resistance protein MdtG.